The following is a 224-amino-acid chain: Probable Brix domain-containing ribosomal biogenesis protein (224 aa).

A Brix domain is found at 1 to 196 (MMLITTSHRP…IWIMEDGRRW (196 aa)).

In terms of biological role, probably involved in the biogenesis of the ribosome. The chain is Probable Brix domain-containing ribosomal biogenesis protein from Pyrococcus horikoshii (strain ATCC 700860 / DSM 12428 / JCM 9974 / NBRC 100139 / OT-3).